The following is a 287-amino-acid chain: Very long chain fatty acid elongase 4 (287 aa).

3 consecutive transmembrane segments (helical) span residues 33 to 53, 64 to 84, and 115 to 135; these read ILVY…EHIM, PFVV…YSCV, and FWVF…VFLV. Positions 145–149 match the HxxHH motif motif; sequence HWYHH. Histidine 148 functions as the Nucleophile in the catalytic mechanism. 4 consecutive transmembrane segments (helical) span residues 150-170, 172-192, 199-219, and 241-261; these read LTVA…GLWF, TMNY…ACGM, IAPF…LIVL, and LGLV…GKLY.

It belongs to the ELO family.

It is found in the membrane. It carries out the reaction a very-long-chain acyl-CoA + malonyl-CoA + H(+) = a very-long-chain 3-oxoacyl-CoA + CO2 + CoA. Functionally, involved in the synthesis of fatty acids. Elongates C16:0 and C18:0 fatty acids to C26:0, with C24:0 being the main product. This chain is Very long chain fatty acid elongase 4, found in Trypanosoma cruzi (strain CL Brener).